Consider the following 914-residue polypeptide: Trafficking kinesin-binding protein 2 (914 aa).

Positions 1–21 are enriched in polar residues; the sequence is MSQSQNAIFTSPTGEENLMNS. The segment at 1-30 is disordered; the sequence is MSQSQNAIFTSPTGEENLMNSNHRDSESIT. The HAP1 N-terminal domain maps to 48–353; the sequence is EEQLPQYRLK…QEEIKELRSR (306 aa). Residues 134–354 are a coiled coil; it reads QALLKRNHVL…EEIKELRSRS (221 aa). The segment at 359–509 is interaction with HGS; the sequence is HLYFSQSYGA…KQFFAEEWQR (151 aa). At Ser420 the chain carries Phosphoserine. Disordered stretches follow at residues 447–482 and 765–787; these read QQTEDKSLLNQGSSSEEVAGSSQKMGQPGPSGDSDL and QPLPKSLAIPSTPPNSPSHSPCP. The segment covering 454–471 has biased composition (polar residues); it reads LLNQGSSSEEVAGSSQKM. The segment covering 775–787 has biased composition (pro residues); the sequence is STPPNSPSHSPCP.

Belongs to the milton family. Interacts with GABA-A receptor and O-GlcNAc transferase. Interacts with HGS. Interacts with RHOT1/Miro-1 and RHOT2/Miro-2. O-glycosylated. In terms of tissue distribution, widely expressed, with highest expression in heart.

The protein localises to the cytoplasm. It is found in the early endosome. The protein resides in the mitochondrion. May regulate endosome-to-lysosome trafficking of membrane cargo, including EGFR. The sequence is that of Trafficking kinesin-binding protein 2 (TRAK2) from Homo sapiens (Human).